Here is a 117-residue protein sequence, read N- to C-terminus: Putative membrane protein insertion efficiency factor (117 aa).

The protein belongs to the UPF0161 family.

It is found in the cell inner membrane. Functionally, could be involved in insertion of integral membrane proteins into the membrane. The sequence is that of Putative membrane protein insertion efficiency factor from Bartonella henselae (strain ATCC 49882 / DSM 28221 / CCUG 30454 / Houston 1) (Rochalimaea henselae).